We begin with the raw amino-acid sequence, 217 residues long: Proteasome subunit beta type-9 (217 aa).

Positions methionine 1–glycine 18 are cleaved as a propeptide — removed in mature form. The active-site Nucleophile is the threonine 19.

It belongs to the peptidase T1B family. In terms of assembly, the 26S proteasome consists of a 20S proteasome core and two 19S regulatory subunits. The 20S proteasome core is composed of 28 subunits that are arranged in four stacked rings, resulting in a barrel-shaped structure. The two end rings are each formed by seven alpha subunits, and the two central rings are each formed by seven beta subunits. The catalytic chamber with the active sites is on the inside of the barrel. Component of the immunoproteasome, where it displaces the equivalent housekeeping subunit PSMB6. Post-translationally, autocleaved. The resulting N-terminal Thr residue of the mature subunit is responsible for the nucleophile proteolytic activity.

It is found in the cytoplasm. The protein resides in the nucleus. The catalysed reaction is Cleavage of peptide bonds with very broad specificity.. The proteasome is a multicatalytic proteinase complex which is characterized by its ability to cleave peptides with Arg, Phe, Tyr, Leu, and Glu adjacent to the leaving group at neutral or slightly basic pH. The proteasome has an ATP-dependent proteolytic activity. This subunit is involved in antigen processing to generate class I binding peptides. This chain is Proteasome subunit beta type-9 (psmb9), found in Oncorhynchus mykiss (Rainbow trout).